Consider the following 870-residue polypeptide: Leucine--tRNA ligase (870 aa).

The 'HIGH' region motif lies at 42–52 (PYPSGKLHMGH). A 'KMSKS' region motif is present at residues 629–633 (KMSKS). K632 lines the ATP pocket.

It belongs to the class-I aminoacyl-tRNA synthetase family.

It localises to the cytoplasm. It catalyses the reaction tRNA(Leu) + L-leucine + ATP = L-leucyl-tRNA(Leu) + AMP + diphosphate. In Azotobacter vinelandii (strain DJ / ATCC BAA-1303), this protein is Leucine--tRNA ligase.